A 380-amino-acid polypeptide reads, in one-letter code: Protein Wnt-5a (380 aa).

An N-terminal signal peptide occupies residues methionine 1–alanine 37. Positions glutamine 38–histidine 61 are excised as a propeptide. Cysteines 104 and 115 form a disulfide. 2 N-linked (GlcNAc...) asparagine glycosylation sites follow: asparagine 114 and asparagine 120. Intrachain disulfides connect cysteine 154–cysteine 162, cysteine 164–cysteine 182, cysteine 238–cysteine 252, cysteine 240–cysteine 247, cysteine 309–cysteine 340, cysteine 325–cysteine 335, cysteine 339–cysteine 379, cysteine 355–cysteine 370, cysteine 357–cysteine 367, and cysteine 362–cysteine 363. The O-palmitoleoyl serine; by PORCN moiety is linked to residue serine 244. N-linked (GlcNAc...) asparagine glycans are attached at residues asparagine 312 and asparagine 326.

It belongs to the Wnt family. In terms of assembly, forms a soluble 1:1 complex with AFM; this prevents oligomerization and is required for prolonged biological activity. The complex with AFM may represent the physiological form in body fluids. Homooligomer; disulfide-linked, leading to inactivation (in vitro). Interacts with PORCN. Interacts with WLS. Interacts with glypican GCP3. Interacts with PKD1 (via extracellular domain). Interacts with TMEM67. Glycosylation is necessary for secretion but not for activity. Post-translationally, palmitoleoylation is required for efficient binding to frizzled receptors. Depalmitoleoylation leads to Wnt signaling pathway inhibition. In terms of processing, proteolytic processing by TIKI1 and TIKI2 promotes oxidation and formation of large disulfide-bond oligomers, leading to inactivation of WNT5A.

The protein resides in the secreted. The protein localises to the extracellular space. It is found in the extracellular matrix. Its function is as follows. Ligand for members of the frizzled family of seven transmembrane receptors. Can activate or inhibit canonical Wnt signaling, depending on receptor context. In the presence of FZD4, activates beta-catenin signaling. In the presence of ROR2, inhibits the canonical Wnt pathway by promoting beta-catenin degradation through a GSK3-independent pathway which involves down-regulation of beta-catenin-induced reporter gene expression. Suppression of the canonical pathway allows chondrogenesis to occur and inhibits tumor formation. Stimulates cell migration. Decreases proliferation, migration, invasiveness and clonogenicity of carcinoma cells and may act as a tumor suppressor. Mediates motility of melanoma cells. Required during embryogenesis for extension of the primary anterior-posterior axis and for outgrowth of limbs and the genital tubercle. Inhibits type II collagen expression in chondrocytes. This Rattus norvegicus (Rat) protein is Protein Wnt-5a (Wnt5a).